Here is a 686-residue protein sequence, read N- to C-terminus: Epsin (686 aa).

Positions 14 to 145 (DAVLNTPEIE…QDDQRIKEER (132 aa)) constitute an ENTH domain. Disordered regions lie at residues 177–417 (YDSD…FNNN) and 463–571 (NSSM…TMRP). The segment covering 185–211 (NQRDSYGGNQRDSYGGNQRDSYGGNQR) has biased composition (polar residues). A compositionally biased stretch (basic and acidic residues) spans 212–225 (ETTRRDSFNGRDEG). Polar residues predominate over residues 237-256 (SYDSDPYSNTRAEYENYSNR). 2 stretches are compositionally biased toward low complexity: residues 269–340 (SNNS…SGPS) and 383–417 (NNTN…FNNN). Polar residues predominate over residues 491–503 (FDQQSGDFSNKND). Residues 504–521 (GQQKPKDTNDPWSKKDLF) show a composition bias toward basic and acidic residues. Low complexity predominate over residues 527-547 (GNQNPNQSPVNNTNNNNNGNT). A compositionally biased stretch (polar residues) spans 558–567 (PITSAGSTIP).

This sequence belongs to the epsin family.

Its subcellular location is the membrane. The protein localises to the clathrin-coated pit. Functionally, binds to membranes enriched in phosphatidylinositol 4,5-bisphosphate (PtdIns(4,5)P2). The protein is Epsin (epnA) of Dictyostelium discoideum (Social amoeba).